We begin with the raw amino-acid sequence, 311 residues long: Transcription factor MafB (311 aa).

Disordered regions lie at residues P35–Q78 and E150–F199. Low complexity predominate over residues S54–T76. Residues H157–Q167 are compositionally biased toward basic residues. Over residues A168–S194 the composition is skewed to low complexity. The segment at R226–K251 is basic motif. The 64-residue stretch at R226–L289 folds into the bZIP domain. A leucine-zipper region spans residues L254–L275.

The protein belongs to the bZIP family. Maf subfamily. Homodimer or heterodimer with other bHLH-Zip transcription factors. Binds DNA as a homodimer or heterodimer. Self-associates; the interaction requires the intact MAFB leucine-zipper domain. Interacts with FOS, HOXD12 and PRRX1. In terms of tissue distribution, expressed in brain, thymus, gut, lung, mesenterium, spleen, kidney, ovary and bursa.

Its subcellular location is the nucleus. Functionally, acts as a transcriptional activator or repressor. Positively regulates the expression of alpha-A crystallin genes during lens fiber cell differentiation. Binds to Maf recognition elements (MARE). In Gallus gallus (Chicken), this protein is Transcription factor MafB (MAFB).